The following is a 283-amino-acid chain: CDP-abequose synthase (283 aa).

NAD(+) is bound by residues 7-13 (GGSGYIG), 48-49 (EF), Y129, and K133. Y129 functions as the Proton acceptor in the catalytic mechanism.

It belongs to the NAD(P)-dependent epimerase/dehydratase family.

It catalyses the reaction CDP-alpha-D-abequose + NADP(+) = CDP-4-dehydro-3,6-dideoxy-alpha-D-glucose + NADPH + H(+). It participates in bacterial outer membrane biogenesis; LPS O-antigen biosynthesis. In terms of biological role, the CDP-abequose synthase is involved in lipopolysaccharides (LPS) synthesis containing abequose which are important antigens of the cell surface responsible for the serological O specificity. Derivatives of the 3,6-dideoxyhexose group have a particular highly immunogenic character. The sequence is that of CDP-abequose synthase (rfbJ) from Yersinia pseudotuberculosis.